The primary structure comprises 56 residues: PI-actitoxin-Afv2b (56 aa).

Residues 5–55 (CLLPMKVGPCRARVPRFYYNSSSGKCEGFTYGGCGANANKFQTKAQCEKAC) form the BPTI/Kunitz inhibitor domain. Disulfide bonds link Cys5–Cys55, Cys14–Cys38, and Cys30–Cys51.

The protein belongs to the venom Kunitz-type family. Sea anemone type 2 potassium channel toxin subfamily. Expressed by acrorhagi.

It is found in the secreted. The protein resides in the nematocyst. In terms of biological role, serine protease inhibitor that is strongly active against trypsin (900 IU/mg) and moderately active against plasmin. This chain is PI-actitoxin-Afv2b, found in Anthopleura fuscoviridis (Sea anemone).